The sequence spans 403 residues: Arginine deiminase (403 aa).

Catalysis depends on cysteine 388, which acts as the Amidino-cysteine intermediate.

It belongs to the arginine deiminase family.

The protein localises to the cytoplasm. It carries out the reaction L-arginine + H2O = L-citrulline + NH4(+). It functions in the pathway amino-acid degradation; L-arginine degradation via ADI pathway; carbamoyl phosphate from L-arginine: step 1/2. The protein is Arginine deiminase of Mycoplasma capricolum subsp. capricolum (strain California kid / ATCC 27343 / NCTC 10154).